The following is a 451-amino-acid chain: Bifunctional protein GlmU (451 aa).

The pyrophosphorylase stretch occupies residues 1–229; that stretch reads MQRNAVILAA…FNEIMGVNDR (229 aa). UDP-N-acetyl-alpha-D-glucosamine contacts are provided by residues 8–11, Lys22, Gln72, and 77–78; these read LAAG and GT. Asp102 is a binding site for Mg(2+). UDP-N-acetyl-alpha-D-glucosamine-binding residues include Gly139, Glu154, and Asn227. Asn227 is a binding site for Mg(2+). Residues 230–250 form a linker region; sequence VMLSNAEKALQQRINIEHMRN. An N-acetyltransferase region spans residues 251-451; that stretch reads GVTIIDPTTT…QITKEGYLKK (201 aa). Positions 332 and 350 each coordinate UDP-N-acetyl-alpha-D-glucosamine. His362 acts as the Proton acceptor in catalysis. UDP-N-acetyl-alpha-D-glucosamine contacts are provided by Tyr365 and Asn376. Residues 385-386, Ala422, and Arg439 contribute to the acetyl-CoA site; that span reads NY.

In the N-terminal section; belongs to the N-acetylglucosamine-1-phosphate uridyltransferase family. The protein in the C-terminal section; belongs to the transferase hexapeptide repeat family. In terms of assembly, homotrimer. The cofactor is Mg(2+).

The protein localises to the cytoplasm. It carries out the reaction alpha-D-glucosamine 1-phosphate + acetyl-CoA = N-acetyl-alpha-D-glucosamine 1-phosphate + CoA + H(+). The catalysed reaction is N-acetyl-alpha-D-glucosamine 1-phosphate + UTP + H(+) = UDP-N-acetyl-alpha-D-glucosamine + diphosphate. The protein operates within nucleotide-sugar biosynthesis; UDP-N-acetyl-alpha-D-glucosamine biosynthesis; N-acetyl-alpha-D-glucosamine 1-phosphate from alpha-D-glucosamine 6-phosphate (route II): step 2/2. It participates in nucleotide-sugar biosynthesis; UDP-N-acetyl-alpha-D-glucosamine biosynthesis; UDP-N-acetyl-alpha-D-glucosamine from N-acetyl-alpha-D-glucosamine 1-phosphate: step 1/1. It functions in the pathway bacterial outer membrane biogenesis; LPS lipid A biosynthesis. In terms of biological role, catalyzes the last two sequential reactions in the de novo biosynthetic pathway for UDP-N-acetylglucosamine (UDP-GlcNAc). The C-terminal domain catalyzes the transfer of acetyl group from acetyl coenzyme A to glucosamine-1-phosphate (GlcN-1-P) to produce N-acetylglucosamine-1-phosphate (GlcNAc-1-P), which is converted into UDP-GlcNAc by the transfer of uridine 5-monophosphate (from uridine 5-triphosphate), a reaction catalyzed by the N-terminal domain. The protein is Bifunctional protein GlmU of Staphylococcus haemolyticus (strain JCSC1435).